The sequence spans 151 residues: Transcriptional repressor NrdR (151 aa).

A zinc finger lies at 3–34 (CPYCAYGESKVVDSRSTEDGSSIRRRRECLKC). Residues 49-139 (ILVIKKNMSR…VYRQFKDINT (91 aa)) form the ATP-cone domain.

The protein belongs to the NrdR family. Zn(2+) serves as cofactor.

In terms of biological role, negatively regulates transcription of bacterial ribonucleotide reductase nrd genes and operons by binding to NrdR-boxes. This is Transcriptional repressor NrdR from Clostridium botulinum (strain 657 / Type Ba4).